Reading from the N-terminus, the 249-residue chain is CDP-diacylglycerol pyrophosphatase (249 aa).

Residues 5 to 25 form a helical membrane-spanning segment; it reads GYFLLAVIVIVAAAGVGYWKF.

It belongs to the Cdh family.

The protein resides in the cell inner membrane. It catalyses the reaction a CDP-1,2-diacyl-sn-glycerol + H2O = a 1,2-diacyl-sn-glycero-3-phosphate + CMP + 2 H(+). The protein operates within phospholipid metabolism; CDP-diacylglycerol degradation; phosphatidate from CDP-diacylglycerol: step 1/1. This Salmonella arizonae (strain ATCC BAA-731 / CDC346-86 / RSK2980) protein is CDP-diacylglycerol pyrophosphatase.